The following is a 919-amino-acid chain: MASATAAAARRGLGRALPLFWRGYQTERGVYGYRPRKPESREPQGALERPPVDHGLARLVTVYCEHGHKAAKINPLFTGQALLENVPEIQALVQTLQGPFHTAGLLNMGKEEASLEEVLVYLNQIYCGQISIETSQLQSQDEKDWFAKRFEELQKETFTTEERKHLSKLMLESQEFDHFLATKFSTVKRYGGEGAESMMGFFHELLKMSAYSGITDVIIGMPHRGRLNLLTGLLQFPPELMFRKMRGLSEFPENFSATGDVLSHLTSSVDLYFGAHHPLHVTMLPNPSHLEAVNPVAVGKTRGRQQSRQDGDYSPDNSAQPGDRVICLQVHGDASFCGQGIVPETFTLSNLPHFRIGGSVHLIVNNQLGYTTPAERGRSSLYCSDIGKLVGCAIIHVNGDSPEEVVRATRLAFEYQRQFRKDVIIDLLCYRQWGHNELDEPFYTNPIMYKIIRARKSIPDTYAEHLIAGGLMTQEEVSEIKSSYYAKLNDHLNNMAHYRPPALNLQAHWQGLAQPEAQITTWSTGVPLDLLRFVGMKSVEVPRELQMHSHLLKTHVQSRMEKMMDGIKLDWATAEALALGSLLAQGFNVRLSGQDVGRGTFSQRHAIVVCQETDDTYIPLNHMDPNQKGFLEVSNSPLSEEAVLGFEYGMSIESPKLLPLWEAQFGDFFNGAQIIFDTFISGGEAKWLLQSGIVILLPHGYDGAGPDHSSCRIERFLQMCDSAEEGVDGDTVNMFVVHPTTPAQYFHLLRRQMVRNFRKPLIVASPKMLLRLPAAVSTLQEMAPGTTFNPVIGDSSVDPKKVKTLVFCSGKHFYSLVKQRESLGAKKHDFAIIRVEELCPFPLDSLQQEMSKYKHVKDHIWSQEEPQNMGPWSFVSPRFEKQLACKLRLVGRPPLPVPAVGIGTVHLHQHEDILAKTFA.

An N6-succinyllysine mark is found at Lys183 and Lys188. Residues 299–320 (GKTRGRQQSRQDGDYSPDNSAQ) form a disordered region. An N6-succinyllysine mark is found at Lys800 and Lys818.

It belongs to the alpha-ketoglutarate dehydrogenase family. As to quaternary structure, the 2-oxoadipate dehydrogenase complex is composed of OADH (2-oxoadipate dehydrogenase; E1a), DLST (dihydrolipoamide succinyltransferase; E2) and DLD (dihydrolipoamide dehydrogenase; E3). E1a functional unit is a dimer. Interacts with DLST. Thiamine diphosphate serves as cofactor.

Its subcellular location is the mitochondrion. It catalyses the reaction N(6)-[(R)-lipoyl]-L-lysyl-[protein] + 2-oxoadipate + H(+) = N(6)-[(R)-S(8)-glutaryldihydrolipoyl]-L-lysyl-[protein] + CO2. It functions in the pathway amino-acid degradation. 2-oxoadipate dehydrogenase (E1a) component of the 2-oxoadipate dehydrogenase complex (OADHC). Participates in the first step, rate limiting for the overall conversion of 2-oxoadipate (alpha-ketoadipate) to glutaryl-CoA and CO(2) catalyzed by the whole OADHC. Catalyzes the irreversible decarboxylation of 2-oxoadipate via the thiamine diphosphate (ThDP) cofactor and subsequent transfer of the decarboxylated acyl intermediate on an oxidized dihydrolipoyl group that is covalently amidated to the E2 enzyme (dihydrolipoyllysine-residue succinyltransferase or DLST). Can catalyze the decarboxylation of 2-oxoglutarate in vitro, but at a much lower rate than 2-oxoadipate. Responsible for the last step of L-lysine, L-hydroxylysine and L-tryptophan catabolism with the common product being 2-oxoadipate. The sequence is that of 2-oxoadipate dehydrogenase complex component E1 (DHTKD1) from Homo sapiens (Human).